Reading from the N-terminus, the 137-residue chain is Bet1-like protein At4g14600 (137 aa).

The Cytoplasmic segment spans residues 1–113 (MASNPHRSGA…MSIIRSGNNH (113 aa)). Residues 43–105 (DPMHSDLDDE…KNNIRKLNMS (63 aa)) form the t-SNARE coiled-coil homology domain. Residues 114–134 (IMHVVLFALLVFFVLYIWSKM) traverse the membrane as a helical; Anchor for type IV membrane protein segment. At 135–137 (FKR) the chain is on the vesicular side.

Belongs to the BET1 family.

It localises to the golgi apparatus membrane. The protein localises to the endoplasmic reticulum membrane. Functionally, required for vesicular transport from the ER to the Golgi complex. Functions as a SNARE associated with ER-derived vesicles. This Arabidopsis thaliana (Mouse-ear cress) protein is Bet1-like protein At4g14600.